The primary structure comprises 129 residues: Large ribosomal subunit protein bL32m (129 aa).

Residues 1–63 (MAAMTAAAAA…LEDIWEGILR (63 aa)) constitute a mitochondrion transit peptide. The Zn(2+) site is built by C94, C97, C107, and C110.

This sequence belongs to the bacterial ribosomal protein bL32 family. In terms of assembly, component of the mitochondrial large ribosomal subunit (mt-LSU). Mature N.crassa 74S mitochondrial ribosomes consist of a small (37S) and a large (54S) subunit. The 37S small subunit contains a 16S ribosomal RNA (16S mt-rRNA) and 32 different proteins. The 54S large subunit contains a 23S rRNA (23S mt-rRNA) and 42 different proteins. bL32m has a zinc binding site. In terms of processing, MRPL32 precursor is processed by the m-AAA protease (composed of YTA12/RCA1 and YTA10/AFG3), which cleaves the N-terminal transit peptide. Cleavage by the m-AAA protease takes place prior to assembly into the large subunit, an essential step for mitochondrial ribosome (mitoribosome) assembly. Proper processing by the m-AAA protease is dependent on the zinc-binding region within the tightly folded C-terminal domain of MRPL32: zinc-dependent folding halts degradation initiated from the N-terminus and triggers the release of mature MRPL32.

Its subcellular location is the mitochondrion. In terms of biological role, component of the mitochondrial ribosome (mitoribosome), a dedicated translation machinery responsible for the synthesis of mitochondrial genome-encoded proteins, including at least some of the essential transmembrane subunits of the mitochondrial respiratory chain. The mitoribosomes are attached to the mitochondrial inner membrane and translation products are cotranslationally integrated into the membrane. This is Large ribosomal subunit protein bL32m (mrpl32) from Neurospora crassa (strain ATCC 24698 / 74-OR23-1A / CBS 708.71 / DSM 1257 / FGSC 987).